The primary structure comprises 315 residues: Methylglutaconyl-CoA hydratase, mitochondrial (315 aa).

Residues 1–43 (MAAAAAPGALGALSAGRVRLVAACCARLGSAAWARGTAPRRGY) constitute a mitochondrion transit peptide. The residue at position 76 (K76) is an N6-acetyllysine; alternate. The residue at position 76 (K76) is an N6-succinyllysine; alternate. Positions 81 to 95 (KNLLKMLSKAVDALK) are RNA-binding. K85 carries the post-translational modification N6-succinyllysine. Residues K89 and K120 each carry the N6-acetyllysine; alternate modification. N6-succinyllysine; alternate occurs at positions 89 and 120. N6-succinyllysine occurs at positions 124 and 136. N6-acetyllysine; alternate is present on residues K180 and K187. An N6-succinyllysine; alternate mark is found at K180 and K187. An N6-succinyllysine modification is found at K305.

It belongs to the enoyl-CoA hydratase/isomerase family. As to quaternary structure, homohexamer.

It localises to the mitochondrion. It carries out the reaction (3S)-3-hydroxy-3-methylglutaryl-CoA = 3-methyl-(2E)-glutaconyl-CoA + H2O. It catalyses the reaction (3S)-citramalyl-CoA = itaconyl-CoA + H2O. The catalysed reaction is 3-hydroxyisovaleryl-CoA = 3-methylbut-2-enoyl-CoA + H2O. The enzyme catalyses (S)-3-hydroxyglutaryl-CoA = (2E)-glutaconyl-CoA + H2O. It functions in the pathway amino-acid degradation; L-leucine degradation; (S)-3-hydroxy-3-methylglutaryl-CoA from 3-isovaleryl-CoA: step 3/3. Catalyzes the fifth step in the leucine degradation pathway, the reversible hydration of 3-methylglutaconyl-CoA (3-MG-CoA) to 3-hydroxy-3-methylglutaryl-CoA (HMG-CoA). Can catalyze the reverse reaction but at a much lower rate in vitro. HMG-CoA is then quickly degraded by another enzyme (such as HMG-CoA lyase) to give acetyl-CoA and acetoacetate. Uses other substrates such as (2E)-glutaconyl-CoA efficiently in vitro, and to a lesser extent 3-methylcrotonyl-CoA (3-methyl-(2E)-butenoyl-CoA), crotonyl-CoA ((2E)-butenoyl-CoA) and 3-hydroxybutanoyl-CoA (the missing carboxylate reduces affinity to the active site). Originally it was identified as an RNA-binding protein as it binds to AU-rich elements (AREs) in vitro. AREs direct rapid RNA degradation and mRNA deadenylation. Might have itaconyl-CoA hydratase activity, converting itaconyl-CoA into citramalyl-CoA in the C5-dicarboxylate catabolism pathway. The C5-dicarboxylate catabolism pathway is required to detoxify itaconate, an antimicrobial metabolite and immunomodulator produced by macrophages during certain infections, that can act as a vitamin B12-poisoning metabolite. The polypeptide is Methylglutaconyl-CoA hydratase, mitochondrial (Rattus norvegicus (Rat)).